Here is a 118-residue protein sequence, read N- to C-terminus: Large ribosomal subunit protein uL18 (118 aa).

This sequence belongs to the universal ribosomal protein uL18 family. Part of the 50S ribosomal subunit; part of the 5S rRNA/L5/L18/L25 subcomplex. Contacts the 5S and 23S rRNAs.

Its function is as follows. This is one of the proteins that bind and probably mediate the attachment of the 5S RNA into the large ribosomal subunit, where it forms part of the central protuberance. This Helicobacter hepaticus (strain ATCC 51449 / 3B1) protein is Large ribosomal subunit protein uL18.